The chain runs to 317 residues: D-aminoacyl-tRNA deacylase (317 aa).

This sequence belongs to the DtdA deacylase family. Zn(2+) serves as cofactor. In terms of tissue distribution, ubiquitous.

The protein resides in the nucleus. The protein localises to the cytoplasm. It carries out the reaction a D-aminoacyl-tRNA + H2O = a tRNA + a D-alpha-amino acid + H(+). The enzyme catalyses glycyl-tRNA(Ala) + H2O = tRNA(Ala) + glycine + H(+). Hydrolyzes D-aminoacyl-tRNA into D-amino acid and free tRNA. Broad specificity toward the amino acid, but strict specificity toward the D-isomer. Seems to be required for ethanol tolerance. The chain is D-aminoacyl-tRNA deacylase (GEK1) from Arabidopsis thaliana (Mouse-ear cress).